The sequence spans 170 residues: Peptidyl-prolyl cis-trans isomerase ESS1 (170 aa).

The 35-residue stretch at 9-43 (TGLPTPWTVRYSKSKKREYFFNPETKHSQWEEPEG) folds into the WW domain. The interval 30–53 (NPETKHSQWEEPEGTNKDQLHKHL) is disordered. A compositionally biased stretch (basic and acidic residues) spans 32–53 (ETKHSQWEEPEGTNKDQLHKHL). In terms of domain architecture, PpiC spans 57–170 (PVRVRCLHIL…SGVHVIKRVG (114 aa)). Ser161 is modified (phosphoserine).

The protein belongs to the PpiC/parvulin rotamase family. Interacts with the RNA polymerase II largest subunit (RPB1) and with the SIN1-RDP3 HDAC subunit SIN3.

It is found in the cytoplasm. It localises to the nucleus. It catalyses the reaction [protein]-peptidylproline (omega=180) = [protein]-peptidylproline (omega=0). Its activity is regulated as follows. Inhibited by 5-hydroxy-1,4-naphthoquinone (juglone), but not by FK506 or cyclosporin A. In terms of biological role, essential PPIase specific for phosphoserine and phosphothreonine N-terminal to the proline residue. Required for efficient pre-mRNA 3'-end processing and transcription termination, probably by inducing conformational changes by proline-directed isomerization in the C-terminal domain (CTD) of RPB1, thereby altering cofactor binding with the RNA polymerase II transcription complex. Also targets the SIN3-RPD3 histone deacetylase complex (HDAC). The protein is Peptidyl-prolyl cis-trans isomerase ESS1 (ESS1) of Saccharomyces cerevisiae (strain ATCC 204508 / S288c) (Baker's yeast).